We begin with the raw amino-acid sequence, 159 residues long: Ribosome maturation factor RimP (159 aa).

This sequence belongs to the RimP family.

It localises to the cytoplasm. Its function is as follows. Required for maturation of 30S ribosomal subunits. The sequence is that of Ribosome maturation factor RimP from Trichlorobacter lovleyi (strain ATCC BAA-1151 / DSM 17278 / SZ) (Geobacter lovleyi).